Consider the following 78-residue polypeptide: Large ribosomal subunit protein bL28 (78 aa).

Residues 1–20 (MSRVCQVTGKRPVTGNNRSH) form a disordered region.

It belongs to the bacterial ribosomal protein bL28 family.

This is Large ribosomal subunit protein bL28 from Vibrio campbellii (strain ATCC BAA-1116).